The sequence spans 60 residues: Large ribosomal subunit protein bL32 (60 aa).

Residues 1–60 (MAVQQNKKSPSKRGMHRSHNALTVPGIAVEPTTGETHMRHHISPNGFYRGRQVLKNKSEA) form a disordered region. Residues 9 to 19 (SPSKRGMHRSH) show a composition bias toward basic residues.

Belongs to the bacterial ribosomal protein bL32 family.

In Acidovorax ebreus (strain TPSY) (Diaphorobacter sp. (strain TPSY)), this protein is Large ribosomal subunit protein bL32.